The following is a 648-amino-acid chain: NADP-dependent malic enzyme, chloroplastic (648 aa).

The N-terminal 61 residues, 1–61 (MISLNSSFLE…VDSAVRDVNA (61 aa)), are a transit peptide targeting the chloroplast. Tyrosine 195 (proton donor) is an active-site residue. NAD(+) is bound at residue arginine 248. Lysine 266 acts as the Proton acceptor in catalysis. A divalent metal cation contacts are provided by glutamate 339, aspartate 340, and aspartate 363. Aspartate 363 is a binding site for NAD(+). 392 to 408 (LFLGAGEAGTGIAELIA) is an NADP(+) binding site. Asparagine 504 provides a ligand contact to NAD(+).

It belongs to the malic enzymes family. Homotetramer. It depends on Mg(2+) as a cofactor. Mn(2+) serves as cofactor.

It localises to the plastid. The protein localises to the chloroplast. It catalyses the reaction (S)-malate + NADP(+) = pyruvate + CO2 + NADPH. The catalysed reaction is oxaloacetate + H(+) = pyruvate + CO2. Its pathway is photosynthesis; C4 acid pathway. Functionally, the chloroplastic ME isoform decarboxylates malate shuttled from neighboring mesophyll cells. The CO(2) released is then refixed by ribulose-bisphosphate carboxylase. This pathway eliminates the photorespiratory loss of CO(2) that occurs in most plants. The protein is NADP-dependent malic enzyme, chloroplastic (MOD1) of Flaveria trinervia (Clustered yellowtops).